A 153-amino-acid polypeptide reads, in one-letter code: Ribosome maturation factor RimP (153 aa).

Belongs to the RimP family.

It localises to the cytoplasm. Required for maturation of 30S ribosomal subunits. The polypeptide is Ribosome maturation factor RimP (Nostoc sp. (strain PCC 7120 / SAG 25.82 / UTEX 2576)).